The sequence spans 86 residues: Kappa-theraphotoxin-Cg1a 2 (86 aa).

Residues 1-21 (MKVSVVITLAVLGVMFVWASA) form the signal peptide. Positions 22–50 (AELEERGSDQRDSPAWLKSMERIFQSEER) are excised as a propeptide. 3 disulfide bridges follow: C52–C66, C59–C71, and C65–C78. F84 is modified (phenylalanine amide).

This sequence belongs to the neurotoxin 10 (Hwtx-1) family. 28 (Jztx-11) subfamily. Expressed by the venom gland.

It localises to the secreted. Its function is as follows. This toxin acts as a voltage-dependent gating-modifier. It inhibits the sodium conductance (IC(50)=124 nM) and slows the fast inactivation (EC(50)=1180 nM) of Nav1.5/SCN5A. It significantly shifts the activation to more depolarized voltages and decreases the deactivation of Nav1.5 currents upon extreme depolarization, but only slightly affects voltage-dependence of steady-state inactivation. In addition, this toxin causes an approximately five-fold decrease in the rate of recovery from inactivation and an approximately 1.9-fold reduction in the closed-state inactivation rate. This toxin integrates the functions of site 3 toxins (alpha-scorpion toxins) with site 4 toxins (beta-scorpion and spider toxins) by targeting multiple sites on Nav1.5. Also shows inhibition of voltage-gated potassium channels (5 uM completely inhibits Kv2.1/KCNB1, whereas 5 uM moderately inhibits Kv4.2/KCND2 Kv4.1/KCND1 channels). This is Kappa-theraphotoxin-Cg1a 2 from Chilobrachys guangxiensis (Chinese earth tiger tarantula).